Here is a 2130-residue protein sequence, read N- to C-terminus: Highly reducing polyketide synthase anuA (2130 aa).

In terms of domain architecture, Ketosynthase family 3 (KS3) spans 1-213 (MKAGVLSGTS…GANCHVILEQ (213 aa)). In terms of domain architecture, Malonyl-CoA:ACP transacylase (MAT) spans 317 to 644 (FVFTGQGSQW…SFAGNLWLKG (328 aa)). The interval 701 to 836 (HELLGSLLTG…GSIAIHPRNA (136 aa)) is N-terminal hotdog fold. Positions 701–1000 (HELLGSLLTG…LSPYQSTSQA (300 aa)) constitute a PKS/mFAS DH domain. The active-site Proton acceptor; for dehydratase activity is the His733. The tract at residues 849-1000 (LESTAKRTWY…LSPYQSTSQA (152 aa)) is C-terminal hotdog fold. The active-site Proton donor; for dehydratase activity is Asp914. The Enoyl reductase (ER) domain occupies 1405 to 1722 (GQLDTIYFQQ…SRSRIGKVAI (318 aa)). A Ketoreductase (KR) domain is found at 1747–1927 (SYVMVGCLGG…AVAVGLGMIS (181 aa)). One can recognise a Carrier domain in the interval 2047–2125 (TLDEAVLDHI…SLRDLAMTSL (79 aa)). Ser2084 is modified (O-(pantetheine 4'-phosphoryl)serine).

Pantetheine 4'-phosphate serves as cofactor.

The protein operates within secondary metabolite biosynthesis. In terms of biological role, highly reducing polyketide synthase; part of the gene cluster that mediates the biosynthesis of annullatin D, an alkylated aromatic polyketide with a fused dihydrobenzofuran lactone ring system that exhibits potent agonistic activities toward the cannabinoid receptors. The annullatin backbone 2-hydroxymethyl-3-pentylphenol is assembled from one acetyl-CoA starter unit and 5 malonyl-CoA elongation units by cooperation of the highly reducing polyketide synthase anuA, the short-chain dehydrogenase anuB and the oxidoreductase anuC, before being hydroxylated at the C-5 alkyl chain by the cytochrome P450 monooxygenase anuE to form (8S)-annullatin E. The prenyltransferase anuH subsequently installs one isoprenyl group at the benzene ring to form (8S)-annullatin J. Enzymatic or nonenzymatic dihydro-benzofuran ring formation between the prenyl and the phenolic hydroxyl groups in (8S)-annullatin J results in two diastereomers (2S,9S)-annullatin H and compound 12. The intermediate (2S,9S)-annullatin H is then converted to (2S,9S)-annullatin D by the FAD-linked oxidoreductase anuG-catalyzed five-member lactone ring formation. The isomer 12 acts as a substrate for the short-chain dehydrogenase anuF and is oxidized to (2R)-annullatin F, which is subsequently acetylated by an acetyltransferase leading to (2R)-annullatin G formation. The remaining enzymes identified within the cluster, anuD, anuI and anuJ, seem not to be involved in annullatin biosynthesis. The chain is Highly reducing polyketide synthase anuA from Penicillium roqueforti (strain FM164).